The sequence spans 1269 residues: Rho GTPase-activating protein 29 (1269 aa).

S171, S176, S179, and S190 each carry phosphoserine. An F-BAR domain is found at 192–462 (IELDSMLLKN…SAKLYDPGQE (271 aa)). Residues 296–418 (RKNEMEKQRK…EILTQLRKLV (123 aa)) adopt a coiled-coil conformation. Disordered regions lie at residues 472-523 (SAEE…NSAD) and 540-599 (DSES…NSLG). Phosphoserine is present on residues S499, S519, and S552. A compositionally biased stretch (low complexity) spans 540-559 (DSESTGGSSESRSLDSESIS). The segment at 612–657 (THKFRKLRSPTKCRDCEGIVVFHGVECEECLLVCHRKCLENLVIIC) adopts a Phorbol-ester/DAG-type zinc-finger fold. The region spanning 671–886 (AEFTQVAKKE…FLITYSQKIF (216 aa)) is the Rho-GAP domain. The tract at residues 909-936 (PGYLPKSLLSPEERDPERSMKSLFFSSK) is disordered. S918 carries the post-translational modification Phosphoserine. Residues 919–928 (PEERDPERSM) are compositionally biased toward basic and acidic residues. Residues S954 and S1026 each carry the phosphoserine modification. The interval 1120-1269 (RSSGDHPVSI…DLEDEIPQFV (150 aa)) is disordered. Positions 1128-1145 (SITQPSKPYTEPVRSTRQ) are enriched in polar residues. 2 positions are modified to phosphoserine: S1152 and S1154. Polar residues predominate over residues 1162-1172 (TPRTLQPQHWT). Residues 1229-1241 (SRPEEKAEERDQP) show a composition bias toward basic and acidic residues. Over residues 1259 to 1269 (EDLEDEIPQFV) the composition is skewed to acidic residues. An interaction with PTPN13/PTPL1 region spans residues 1266–1269 (PQFV).

As to quaternary structure, interacts with PTPN13/PTPL1. Interacts with RAP2A via its coiled coil domain. Interacts with RASIP1.

Its function is as follows. GTPase activator for the Rho-type GTPases by converting them to an inactive GDP-bound state. Has strong activity toward RHOA, and weaker activity toward RAC1 and CDC42. May act as a specific effector of RAP2A to regulate Rho. In concert with RASIP1, suppresses RhoA signaling and dampens ROCK and MYH9 activities in endothelial cells and plays an essential role in blood vessel tubulogenesis. This chain is Rho GTPase-activating protein 29 (ARHGAP29), found in Bos taurus (Bovine).